Reading from the N-terminus, the 34-residue chain is Small, acid-soluble spore protein M (34 aa).

Basic residues predominate over residues methionine 1–glutamine 10. Residues methionine 1–threonine 34 are disordered. Over residues lysine 12 to leucine 26 the composition is skewed to basic and acidic residues.

It localises to the spore core. In Bacillus subtilis (strain 168), this protein is Small, acid-soluble spore protein M (sspM).